The chain runs to 104 residues: MNNTAFSKLAETTIVYIVDKIEEQDLEGIIDVDLQGDILNLDTENGIYVINTQSASKEIWLSSPVSGPHHFFYEQGKWKSRIGFELMVLLTEELGIRFDKYEIF.

The protein belongs to the frataxin family.

Involved in iron-sulfur (Fe-S) cluster assembly. May act as a regulator of Fe-S biogenesis. The sequence is that of Iron-sulfur cluster assembly protein CyaY from Rickettsia prowazekii (strain Madrid E).